The following is a 95-amino-acid chain: Co-chaperonin GroES (95 aa).

The protein belongs to the GroES chaperonin family. As to quaternary structure, heptamer of 7 subunits arranged in a ring. Interacts with the chaperonin GroEL.

It localises to the cytoplasm. Its function is as follows. Together with the chaperonin GroEL, plays an essential role in assisting protein folding. The GroEL-GroES system forms a nano-cage that allows encapsulation of the non-native substrate proteins and provides a physical environment optimized to promote and accelerate protein folding. GroES binds to the apical surface of the GroEL ring, thereby capping the opening of the GroEL channel. This Lachnoclostridium phytofermentans (strain ATCC 700394 / DSM 18823 / ISDg) (Clostridium phytofermentans) protein is Co-chaperonin GroES.